Here is an 843-residue protein sequence, read N- to C-terminus: Aminopeptidase N (843 aa).

Residues Glu120 and 252–256 (GAMEN) contribute to the substrate site. His288 contacts Zn(2+). Glu289 serves as the catalytic Proton acceptor. Zn(2+) is bound by residues His292 and Glu311.

The protein belongs to the peptidase M1 family. Monomer. Zn(2+) is required as a cofactor.

The protein localises to the cytoplasm. The enzyme catalyses Release of an N-terminal amino acid, Xaa-|-Yaa- from a peptide, amide or arylamide. Xaa is preferably Ala, but may be most amino acids including Pro (slow action). When a terminal hydrophobic residue is followed by a prolyl residue, the two may be released as an intact Xaa-Pro dipeptide.. In terms of biological role, aminopeptidase with broad substrate specificity to several peptides. The protein is Aminopeptidase N (pepN) of Lactobacillus delbrueckii subsp. lactis.